Here is an 88-residue protein sequence, read N- to C-terminus: MKLFLLTLLLVTLVITPSLIQTTMAGSSFCDSKCKLRCSKAGLADRCLKYCGICCEECKCVPSGTYGNKHECPCYRDKKNSKGKSKCP.

An N-terminal signal peptide occupies residues 1 to 25 (MKLFLLTLLLVTLVITPSLIQTTMA).

Belongs to the GASA family. Six disulfide bonds may be present. In terms of tissue distribution, expressed in tubers, stems, axillary and young floral buds, sepals, petals, stamens and carpels, but not in roots, stolons, shoot apex meristem or young leaves.

It localises to the secreted. The protein localises to the cell wall. In terms of biological role, has an antimicrobial activity. Causes a rapid aggregation of both Gram-positive and Gram-negative bacteria, but the antimicrobial activity is not correlated with the capacity to aggregate bacteria. This chain is Snakin-1 (SN1), found in Solanum tuberosum (Potato).